The sequence spans 486 residues: CUGBP Elav-like family member 1 (486 aa).

Met1 is subject to N-acetylmethionine. At Thr4 the chain carries Phosphothreonine. RRM domains lie at 16 to 99 (IKMF…PADS) and 108 to 188 (RKLF…FADT). Lys109 is covalently cross-linked (Glycyl lysine isopeptide (Lys-Gly) (interchain with G-Cter in SUMO2)). A phosphoserine mark is found at Ser179 and Ser302. A disordered region spans residues 277–309 (TPSGTNALTTSSSPLSVLTSSGSSPSSSSSNSV). Over residues 284-309 (LTTSSSPLSVLTSSGSSPSSSSSNSV) the composition is skewed to low complexity. The RRM 3 domain maps to 401-479 (ANLFIYHLPQ…KRLKVQLKRS (79 aa)).

It belongs to the CELF/BRUNOL family. In terms of assembly, component of an EIF2 complex at least composed of CELF1/CUGBP1, CALR, CALR3, EIF2S1, EIF2S2, HSP90B1 and HSPA5. Associates with polysomes. Interacts with HNRNPH1; the interaction in RNA-dependent. Interacts with PARN. Phosphorylated. Its phosphorylation status increases in senescent cells. Ubiquitous.

The protein localises to the nucleus. It localises to the cytoplasm. RNA-binding protein implicated in the regulation of several post-transcriptional events. Involved in pre-mRNA alternative splicing, mRNA translation and stability. Mediates exon inclusion and/or exclusion in pre-mRNA that are subject to tissue-specific and developmentally regulated alternative splicing. Specifically activates exon 5 inclusion of cardiac isoforms of TNNT2 during heart remodeling at the juvenile to adult transition. Acts both as an activator and as a repressor of a pair of coregulated exons: promotes inclusion of the smooth muscle (SM) exon but exclusion of the non-muscle (NM) exon in actinin pre-mRNAs. Activates SM exon 5 inclusion by antagonizing the repressive effect of PTB. Promotes exclusion of exon 11 of the INSR pre-mRNA. Inhibits, together with HNRNPH1, insulin receptor (IR) pre-mRNA exon 11 inclusion in myoblast. Increases translation and controls the choice of translation initiation codon of CEBPB mRNA. Increases mRNA translation of CEBPB in aging liver. Increases translation of CDKN1A mRNA by antagonizing the repressive effect of CALR3. Mediates rapid cytoplasmic mRNA deadenylation. Recruits the deadenylase PARN to the poly(A) tail of EDEN-containing mRNAs to promote their deadenylation. Required for completion of spermatogenesis. Binds to (CUG)n triplet repeats in the 3'-UTR of transcripts such as DMPK and to Bruno response elements (BREs). Binds to muscle-specific splicing enhancer (MSE) intronic sites flanking the alternative exon 5 of TNNT2 pre-mRNA. Binds to AU-rich sequences (AREs or EDEN-like) localized in the 3'-UTR of JUN and FOS mRNAs. Binds to the IR RNA. Binds to the 5'-region of CDKN1A and CEBPB mRNAs. Binds with the 5'-region of CEBPB mRNA in aging liver. May be a specific regulator of miRNA biogenesis. Binds to primary microRNA pri-MIR140 and, with CELF2, negatively regulates the processing to mature miRNA. The chain is CUGBP Elav-like family member 1 (CELF1) from Homo sapiens (Human).